We begin with the raw amino-acid sequence, 251 residues long: Bidirectional sugar transporter SWEET4 (251 aa).

Over 1 to 12 (MVNATVARNIAG) the chain is Extracellular. Asparagine 3 carries an N-linked (GlcNAc...) asparagine glycan. The 85-residue stretch at 12 to 96 (GICGNVISLF…LAIFFFFSPT (85 aa)) folds into the MtN3/slv 1 domain. Residues 13-33 (ICGNVISLFLFLSPIPTFITI) form a helical membrane-spanning segment. Residues 34–45 (YKKKKVEEYKAD) are Cytoplasmic-facing. The helical transmembrane segment at 46-66 (PYLATVLNCALWVFYGLPMVQ) threads the bilayer. Topologically, residues 67–72 (PDSLLV) are extracellular. Residues 73-93 (ITINGTGLAIELVYLAIFFFF) form a helical membrane-spanning segment. The Cytoplasmic segment spans residues 94–103 (SPTSRKVKVG). The helical transmembrane segment at 104 to 124 (LWLIGEMVFVGIVATCTLLLF) threads the bilayer. The Extracellular portion of the chain corresponds to 125–132 (HTHNQRSS). A helical membrane pass occupies residues 133–153 (FVGIFCVIFVSLMYIAPLTIM). Positions 133-216 (FVGIFCVIFV…LILYACYYKT (84 aa)) constitute a MtN3/slv 2 domain. Over 154 to 163 (SKVIKTKSVK) the chain is Cytoplasmic. A helical transmembrane segment spans residues 164–186 (YMPFSLSLANFLNGVVWVIYALI). The Extracellular segment spans residues 187–190 (KFDL). Residues 191 to 213 (FILIGNGLGTVSGAVQLILYACY) form a helical membrane-spanning segment. Topologically, residues 214–251 (YKTTPKDDEDEEDEENLSKVNSQLQLSGNSGQAKRVSA) are cytoplasmic. Residues 220–251 (DDEDEEDEENLSKVNSQLQLSGNSGQAKRVSA) are disordered. Residues 231–245 (SKVNSQLQLSGNSGQ) are compositionally biased toward polar residues.

This sequence belongs to the SWEET sugar transporter family. In terms of assembly, forms homooligomers and heterooligomers with SWEET8 and SWEET17.

It is found in the cell membrane. Its function is as follows. Mediates both low-affinity uptake and efflux of sugar across the plasma membrane. The sequence is that of Bidirectional sugar transporter SWEET4 from Arabidopsis thaliana (Mouse-ear cress).